A 276-amino-acid polypeptide reads, in one-letter code: Orotidine 5'-phosphate decarboxylase (276 aa).

Lys96 (proton donor) is an active-site residue.

It belongs to the OMP decarboxylase family. Type 2 subfamily.

The catalysed reaction is orotidine 5'-phosphate + H(+) = UMP + CO2. It participates in pyrimidine metabolism; UMP biosynthesis via de novo pathway; UMP from orotate: step 2/2. The polypeptide is Orotidine 5'-phosphate decarboxylase (Porphyromonas gingivalis (strain ATCC BAA-308 / W83)).